We begin with the raw amino-acid sequence, 248 residues long: 5'-nucleotidase SurE (248 aa).

A divalent metal cation is bound by residues Asp-8, Asp-9, Ser-39, and Asn-91.

This sequence belongs to the SurE nucleotidase family. A divalent metal cation is required as a cofactor.

The protein resides in the cytoplasm. The enzyme catalyses a ribonucleoside 5'-phosphate + H2O = a ribonucleoside + phosphate. Functionally, nucleotidase that shows phosphatase activity on nucleoside 5'-monophosphates. This is 5'-nucleotidase SurE from Geobacter sp. (strain M21).